Consider the following 161-residue polypeptide: Cyclic pyranopterin monophosphate synthase (161 aa).

Substrate is bound by residues leucine 75–histidine 77 and methionine 113–glutamate 114. Aspartate 128 is an active-site residue.

It belongs to the MoaC family. As to quaternary structure, homohexamer; trimer of dimers.

It catalyses the reaction (8S)-3',8-cyclo-7,8-dihydroguanosine 5'-triphosphate = cyclic pyranopterin phosphate + diphosphate. The protein operates within cofactor biosynthesis; molybdopterin biosynthesis. In terms of biological role, catalyzes the conversion of (8S)-3',8-cyclo-7,8-dihydroguanosine 5'-triphosphate to cyclic pyranopterin monophosphate (cPMP). This Shigella sonnei (strain Ss046) protein is Cyclic pyranopterin monophosphate synthase.